Consider the following 319-residue polypeptide: 4-diphosphocytidyl-2-C-methyl-D-erythritol kinase (319 aa).

The active site involves Lys21. 106–116 (PIGAGLAGGSS) is an ATP binding site. Asp148 is an active-site residue.

This sequence belongs to the GHMP kinase family. IspE subfamily.

The enzyme catalyses 4-CDP-2-C-methyl-D-erythritol + ATP = 4-CDP-2-C-methyl-D-erythritol 2-phosphate + ADP + H(+). The protein operates within isoprenoid biosynthesis; isopentenyl diphosphate biosynthesis via DXP pathway; isopentenyl diphosphate from 1-deoxy-D-xylulose 5-phosphate: step 3/6. In terms of biological role, catalyzes the phosphorylation of the position 2 hydroxy group of 4-diphosphocytidyl-2C-methyl-D-erythritol. In Prochlorococcus marinus (strain MIT 9313), this protein is 4-diphosphocytidyl-2-C-methyl-D-erythritol kinase.